The following is a 396-amino-acid chain: Probable splicing factor YJU2B (396 aa).

The segment at 1-26 is disordered; it reads MGERKGVNKYYPPDFNPEKHGSLNRY. Serine 40 is subject to Phosphoserine. Positions 182–214 form a coiled coil; the sequence is LNSMLRRRFREKKKAIQEEEERDQALQAKASLT. Residues 295–396 form a disordered region; the sequence is IVRRRSRDVP…VADYSDSESE (102 aa). Residue serine 306 is modified to Phosphoserine. The segment covering 315–327 has biased composition (basic and acidic residues); the sequence is KSGEPRVPEEAAQ. The span at 340 to 350 shows a compositional bias: polar residues; sequence TTETPKCSSPR. Residue serine 362 is modified to Phosphoserine.

The protein belongs to the CWC16 family.

The protein localises to the nucleus. Functionally, may be involved in mRNA splicing. This chain is Probable splicing factor YJU2B, found in Homo sapiens (Human).